A 177-amino-acid chain; its full sequence is Bifunctional protein PyrR (177 aa).

Residues 99-111 (VVLVDDVLFTGRT) carry the PRPP-binding motif.

Belongs to the purine/pyrimidine phosphoribosyltransferase family. PyrR subfamily.

The catalysed reaction is UMP + diphosphate = 5-phospho-alpha-D-ribose 1-diphosphate + uracil. Functionally, regulates the transcription of the pyrimidine nucleotide (pyr) operon in response to exogenous pyrimidines. Also displays a weak uracil phosphoribosyltransferase activity which is not physiologically significant. The sequence is that of Bifunctional protein PyrR from Citrifermentans bemidjiense (strain ATCC BAA-1014 / DSM 16622 / JCM 12645 / Bem) (Geobacter bemidjiensis).